The sequence spans 756 residues: Virulence factor MDV010 (756 aa).

An N-terminal signal peptide occupies residues 1–30 (MPSKSIADHHAGYGVALAIVALLLIHGTAL). Residues 96–120 (EEHITLSSPRTSTKTTNENGHEKDS) form a disordered region. Over residues 100-113 (TLSSPRTSTKTTNE) the composition is skewed to polar residues. N-linked (GlcNAc...) asparagine; by host glycosylation is found at Asn222, Asn241, Asn287, Asn423, Asn495, Asn542, Asn552, Asn580, Asn660, Asn684, Asn715, and Asn744.

It localises to the secreted. In terms of biological role, may play a role in host immune modulation since the protein is secreted and provides an advantage for growth in vivo while it is completely dispensable in cell culture. The chain is Virulence factor MDV010 (MDV010) from Gallid herpesvirus 2 (strain Chicken/Md5/ATCC VR-987) (GaHV-2).